Here is a 472-residue protein sequence, read N- to C-terminus: 4-O-methyl-glucuronoyl methylesterase 1 (472 aa).

A signal peptide spans 1 to 20 (MKSAAYLAALAAVLPAYVNA). The CBM1 domain occupies 21 to 56 (QAQEWGQCGGIGWTGATTCVSGTVCTVLNPYYSQCL). The disordered stretch occupies residues 62 to 97 (TAPPPPPPPPTSVSSSSSSSTSSAPPSGPSGTSPTC). Over residues 63–72 (APPPPPPPPT) the composition is skewed to pro residues. Residues 73–96 (SVSSSSSSSTSSAPPSGPSGTSPT) are compositionally biased toward low complexity. 3 disulfides stabilise this stretch: Cys97–Cys131, Cys283–Cys419, and Cys315–Cys391. The GXSYXG catalytic site motif signature appears at 282 to 287 (GCSRDG). Ser284 acts as the Nucleophile in catalysis. Residues Lys288, Gln330, Glu338, and Trp382 each coordinate substrate. His418 (proton donor/acceptor) is an active-site residue. Residue Asn465 is glycosylated (N-linked (GlcNAc...) asparagine).

The protein belongs to the carbohydrate esterase 15 (CE15) family.

The protein resides in the secreted. It carries out the reaction a 4-O-methyl-alpha-D-glucuronosyl ester derivative + H2O = 4-O-methyl-alpha-D-glucuronate derivative + an alcohol + H(+). Functionally, glucuronoyl esterase which may play a significant role in biomass degradation, as it is considered to disconnect hemicellulose from lignin through the hydrolysis of the ester bond between 4-O-methyl-D-glucuronic acid residues of glucuronoxylans and aromatic alcohols of lignin. Can hydrolyze benzyl glucuronic acid (BnGlcA), allyl glucuronic acid (allylGlcA) and to a lower degree methyl glucuronic acid (MeGlcA) in vitro. This chain is 4-O-methyl-glucuronoyl methylesterase 1, found in Phanerochaete chrysosporium (strain RP-78 / ATCC MYA-4764 / FGSC 9002) (White-rot fungus).